We begin with the raw amino-acid sequence, 721 residues long: mRNA (2'-O-methyladenosine-N(6)-)-methyltransferase (721 aa).

Polar residues-rich tracts occupy residues 1 to 10 (MTSENHTTIK) and 19 to 36 (PTGS…TSKP). The disordered stretch occupies residues 1–37 (MTSENHTTIKADSALVMSPTGSTSQAAPFSPSTSKPI). The WW domain occupies 43–77 (ELIQAGWSKCWSKRENRPYYFNRFTNQSLWEMPVL). Residues 93-170 (PASGEANADA…KQGQASTPAP (78 aa)) form a disordered region. The segment covering 132 to 148 (IPATPTTPTVPISPSTP) has biased composition (low complexity). Substrate contacts are provided by arginine 239 and arginine 269. 558-561 (NPPF) provides a ligand contact to S-adenosyl-L-methionine. Residues glutamate 563 and 593-597 (WRDPP) contribute to the substrate site. S-adenosyl-L-methionine is bound at residue 619 to 621 (FEH). Low complexity predominate over residues 675 to 686 (SGRSLPSPGPSS). Residues 675–721 (SGRSLPSPGPSSTNTGEKDSKPAPERTAPSQDNSSPVDKTAQDTTNT) are disordered. A compositionally biased stretch (polar residues) spans 702-721 (APSQDNSSPVDKTAQDTTNT).

It belongs to the CAPAM family.

The protein localises to the nucleus. It carries out the reaction a 5'-end (N(7)-methyl 5'-triphosphoguanosine)-(2'-O-methyladenosine) in mRNA + S-adenosyl-L-methionine = a 5'-end (N(7)-methyl 5'-triphosphoguanosine)-(N(6),2'-O-dimethyladenosine) in mRNA + S-adenosyl-L-homocysteine + H(+). Its activity is regulated as follows. Cap-specific adenosine methyltransferase activity is inhibited by zinc. Functionally, cap-specific adenosine methyltransferase that catalyzes formation of N(6),2'-O-dimethyladenosine cap (m6A(m)) by methylating the adenosine at the second transcribed position of capped mRNAs. The sequence is that of mRNA (2'-O-methyladenosine-N(6)-)-methyltransferase (pcif1) from Danio rerio (Zebrafish).